Consider the following 86-residue polypeptide: Neurotoxin LmNaTx17 (86 aa).

An N-terminal signal peptide occupies residues 1 to 18 (MKILFVIVLAAFFIGVHC). An LCN-type CS-alpha/beta domain is found at 19–85 (KHGYPVQYSG…TWDYKTGKCR (67 aa)). 4 cysteine pairs are disulfide-bonded: Cys33/Cys84, Cys37/Cys58, Cys44/Cys65, and Cys48/Cys67.

The protein belongs to the long (4 C-C) scorpion toxin superfamily. Sodium channel inhibitor family. Beta subfamily. As to expression, expressed by the venom gland.

It is found in the secreted. Its function is as follows. Binds voltage-independently at site-4 of sodium channels (Nav) and shift the voltage of activation toward more negative potentials thereby affecting sodium channel activation and promoting spontaneous and repetitive firing. The protein is Neurotoxin LmNaTx17 of Lychas mucronatus (Chinese swimming scorpion).